A 185-amino-acid polypeptide reads, in one-letter code: Elongation factor P (185 aa).

This sequence belongs to the elongation factor P family.

Its subcellular location is the cytoplasm. It functions in the pathway protein biosynthesis; polypeptide chain elongation. Involved in peptide bond synthesis. Stimulates efficient translation and peptide-bond synthesis on native or reconstituted 70S ribosomes in vitro. Probably functions indirectly by altering the affinity of the ribosome for aminoacyl-tRNA, thus increasing their reactivity as acceptors for peptidyl transferase. In Dictyoglomus thermophilum (strain ATCC 35947 / DSM 3960 / H-6-12), this protein is Elongation factor P.